The chain runs to 489 residues: Betaine aldehyde dehydrogenase (489 aa).

2 residues coordinate K(+): T26 and D93. Residue 150-152 coordinates NAD(+); sequence GAW. K162 acts as the Charge relay system in catalysis. 176 to 179 is a binding site for NAD(+); it reads KPSE. K(+) is bound at residue V180. 229-232 provides a ligand contact to NAD(+); that stretch reads GVET. Residue L245 coordinates K(+). The Proton acceptor role is filled by E251. NAD(+)-binding residues include G253, C285, and E386. C285 (nucleophile) is an active-site residue. Cysteine sulfenic acid (-SOH) is present on C285. The K(+) site is built by K456 and G459. The Charge relay system role is filled by E463.

Belongs to the aldehyde dehydrogenase family. As to quaternary structure, dimer of dimers. K(+) serves as cofactor.

The enzyme catalyses betaine aldehyde + NAD(+) + H2O = glycine betaine + NADH + 2 H(+). The protein operates within amine and polyamine biosynthesis; betaine biosynthesis via choline pathway; betaine from betaine aldehyde: step 1/1. Functionally, involved in the biosynthesis of the osmoprotectant glycine betaine. Catalyzes the irreversible oxidation of betaine aldehyde to the corresponding acid. This Burkholderia orbicola (strain AU 1054) protein is Betaine aldehyde dehydrogenase.